The sequence spans 409 residues: NADH-quinone oxidoreductase subunit D (409 aa).

It belongs to the complex I 49 kDa subunit family. NDH-1 is composed of 14 different subunits. Subunits NuoB, C, D, E, F, and G constitute the peripheral sector of the complex.

The protein resides in the cell inner membrane. It carries out the reaction a quinone + NADH + 5 H(+)(in) = a quinol + NAD(+) + 4 H(+)(out). Its function is as follows. NDH-1 shuttles electrons from NADH, via FMN and iron-sulfur (Fe-S) centers, to quinones in the respiratory chain. The immediate electron acceptor for the enzyme in this species is believed to be ubiquinone. Couples the redox reaction to proton translocation (for every two electrons transferred, four hydrogen ions are translocated across the cytoplasmic membrane), and thus conserves the redox energy in a proton gradient. The sequence is that of NADH-quinone oxidoreductase subunit D (nuoD) from Thermus thermophilus (strain ATCC BAA-163 / DSM 7039 / HB27).